Consider the following 84-residue polypeptide: CDC42 small effector protein 2-A (84 aa).

S-palmitoyl cysteine attachment occurs at residues Cys-10 and Cys-11. Residues 29-42 (IGEPTNFVHTAHVG) form the CRIB domain.

This sequence belongs to the CDC42SE/SPEC family.

Its subcellular location is the cytoplasm. It localises to the cytoskeleton. It is found in the cell membrane. In terms of biological role, probably involved in the organization of the actin cytoskeleton by acting downstream of CDC42, inducing actin filament assembly. In Xenopus tropicalis (Western clawed frog), this protein is CDC42 small effector protein 2-A (cdc42se2-A).